Consider the following 160-residue polypeptide: Cytochrome b6-f complex subunit 4 (160 aa).

3 helical membrane-spanning segments follow: residues 36-56, 95-115, and 131-151; these read LLYI…GLAV, LLGV…PFLE, and TVFL…TLPI.

Belongs to the cytochrome b family. PetD subfamily. In terms of assembly, the 4 large subunits of the cytochrome b6-f complex are cytochrome b6, subunit IV (17 kDa polypeptide, petD), cytochrome f and the Rieske protein, while the 4 small subunits are petG, petL, petM and petN. The complex functions as a dimer.

It is found in the plastid. The protein resides in the chloroplast thylakoid membrane. Component of the cytochrome b6-f complex, which mediates electron transfer between photosystem II (PSII) and photosystem I (PSI), cyclic electron flow around PSI, and state transitions. This is Cytochrome b6-f complex subunit 4 from Arabidopsis thaliana (Mouse-ear cress).